The primary structure comprises 131 residues: Large ribosomal subunit protein bL17 (131 aa).

It belongs to the bacterial ribosomal protein bL17 family. Part of the 50S ribosomal subunit. Contacts protein L32.

The polypeptide is Large ribosomal subunit protein bL17 (Bordetella avium (strain 197N)).